A 382-amino-acid chain; its full sequence is Protein NASP homolog 1 (382 aa).

Residues 1–39 (MDTENIADASDIRVKDASGDSDEKGNGTTTEEETVEQKE) form a disordered region. Residues 10-25 (SDIRVKDASGDSDEKG) show a composition bias toward basic and acidic residues. A TPR 1 repeat occupies 42-75 (LAELLAAGRRALKVNDIDKASDSLSEATELSSEI). Basic and acidic residues predominate over residues 103 to 112 (QLLKGPGEKE). The tract at residues 103–151 (QLLKGPGEKESGDEEQAGNSDDKTDEENGETEKEDGEESGEEEDDDDDT) is disordered. Over residues 125–150 (KTDEENGETEKEDGEESGEEEDDDDD) the composition is skewed to acidic residues. TPR repeat units lie at residues 191 to 224 (ADVL…QRNV) and 233 to 266 (AQTY…LIAR). The stretch at 264-304 (IARQTELKHELERGVDDKEKKSEFENELKELEEMMPGVEEM) forms a coiled coil. Residues 337-382 (PQEAGDQKEANDISSLVRRPAKRAVDAPTDNQAVKKEKEEEGTTSI) are disordered. The segment covering 369 to 382 (AVKKEKEEEGTTSI) has biased composition (basic and acidic residues).

It belongs to the NASP family. As to quaternary structure, may interact with zinc finger protein tra-4 and histone deacetylase hda-1.

It localises to the nucleus. In terms of biological role, promotes normal hermaphrodite (XX) development, in concert with zinc finger protein tra-4 and histone deacetylase hda-1, perhaps as components of a complex. May act redundantly with nasp-2. Involved in innate immune response to B.thuringiensis strain DB27 and S.aureus bacteria. May play a role in the uptake or spreading of dsRNA. This Caenorhabditis elegans protein is Protein NASP homolog 1.